A 619-amino-acid polypeptide reads, in one-letter code: ATP-dependent zinc metalloprotease FtsH 1 (619 aa).

The Cytoplasmic portion of the chain corresponds to 1–8 (MADEKRPA). The helical transmembrane segment at 9-29 (SRAWLGYLLIAVGILVLSGIV) threads the bilayer. Residues 30–108 (RSRGRPLVPY…RIEAKSPQTS (79 aa)) lie on the Periplasmic side of the membrane. Residues 109–129 (VWMQVAIWMLPLVLINAAFFM) form a helical membrane-spanning segment. The Cytoplasmic segment spans residues 130–619 (MLRRAGQGAG…KIAVGPPSAA (490 aa)). 203-210 (GPPGTGKT) contacts ATP. Histidine 426 contributes to the Zn(2+) binding site. Glutamate 427 is a catalytic residue. Zn(2+) contacts are provided by histidine 430 and aspartate 503.

It in the central section; belongs to the AAA ATPase family. The protein in the C-terminal section; belongs to the peptidase M41 family. In terms of assembly, homohexamer. It depends on Zn(2+) as a cofactor.

Its subcellular location is the cell inner membrane. Its function is as follows. Acts as a processive, ATP-dependent zinc metallopeptidase for both cytoplasmic and membrane proteins. Plays a role in the quality control of integral membrane proteins. The polypeptide is ATP-dependent zinc metalloprotease FtsH 1 (Sorangium cellulosum (strain So ce56) (Polyangium cellulosum (strain So ce56))).